The sequence spans 360 residues: Phospho-N-acetylmuramoyl-pentapeptide-transferase (360 aa).

10 helical membrane-spanning segments follow: residues 27-47 (GALI…INSL), 71-91 (TPTM…LLWA), 93-113 (LSSI…SIGF), 134-154 (LGLE…NGQA), 168-188 (FIIN…VGAG), 199-219 (GLAI…AYLS), 239-259 (LAVV…FNAP), 262-282 (AIFM…TVAV), 288-308 (IVLV…IIQV), and 337-357 (QVVI…LSTL).

It belongs to the glycosyltransferase 4 family. MraY subfamily. It depends on Mg(2+) as a cofactor.

Its subcellular location is the cell inner membrane. It catalyses the reaction UDP-N-acetyl-alpha-D-muramoyl-L-alanyl-gamma-D-glutamyl-meso-2,6-diaminopimeloyl-D-alanyl-D-alanine + di-trans,octa-cis-undecaprenyl phosphate = di-trans,octa-cis-undecaprenyl diphospho-N-acetyl-alpha-D-muramoyl-L-alanyl-D-glutamyl-meso-2,6-diaminopimeloyl-D-alanyl-D-alanine + UMP. The protein operates within cell wall biogenesis; peptidoglycan biosynthesis. Its function is as follows. Catalyzes the initial step of the lipid cycle reactions in the biosynthesis of the cell wall peptidoglycan: transfers peptidoglycan precursor phospho-MurNAc-pentapeptide from UDP-MurNAc-pentapeptide onto the lipid carrier undecaprenyl phosphate, yielding undecaprenyl-pyrophosphoryl-MurNAc-pentapeptide, known as lipid I. The protein is Phospho-N-acetylmuramoyl-pentapeptide-transferase of Mesorhizobium japonicum (strain LMG 29417 / CECT 9101 / MAFF 303099) (Mesorhizobium loti (strain MAFF 303099)).